A 325-amino-acid polypeptide reads, in one-letter code: Delta(1)-pyrroline-2-carboxylate reductase (325 aa).

It belongs to the ornithine cyclodeaminase/mu-crystallin family.

The catalysed reaction is L-proline + NAD(+) = 1-pyrroline-2-carboxylate + NADH + H(+). It catalyses the reaction L-proline + NADP(+) = 1-pyrroline-2-carboxylate + NADPH + H(+). Its function is as follows. Catalyzes the reduction of Delta(1)-pyrroline-2-carboxylate (Pyr2C) to L-proline, using preferentially NADPH over NADH as the electron donor. Is likely involved in a degradation pathway that converts trans-3-hydroxy-L-proline (t3LHyp) to L-proline, which allows B.cereus to grow on t3LHyp as a sole carbon source. The protein is Delta(1)-pyrroline-2-carboxylate reductase of Bacillus cereus (strain ATCC 14579 / DSM 31 / CCUG 7414 / JCM 2152 / NBRC 15305 / NCIMB 9373 / NCTC 2599 / NRRL B-3711).